Here is a 267-residue protein sequence, read N- to C-terminus: 2-keto-3-deoxy-L-rhamnonate aldolase (267 aa).

Histidine 49 (proton acceptor) is an active-site residue. Residue glutamine 151 participates in substrate binding. Residue glutamate 153 participates in Mg(2+) binding. Substrate-binding residues include alanine 178 and aspartate 179. Position 179 (aspartate 179) interacts with Mg(2+).

Belongs to the HpcH/HpaI aldolase family. KDR aldolase subfamily. In terms of assembly, homohexamer. Mg(2+) serves as cofactor.

The enzyme catalyses 2-dehydro-3-deoxy-L-rhamnonate = (S)-lactaldehyde + pyruvate. Functionally, catalyzes the reversible retro-aldol cleavage of 2-keto-3-deoxy-L-rhamnonate (KDR) to pyruvate and lactaldehyde. This chain is 2-keto-3-deoxy-L-rhamnonate aldolase, found in Shigella boydii serotype 4 (strain Sb227).